The chain runs to 977 residues: Collagen alpha-2(I) chain (977 aa).

The interval 1–977 (SGGFDFSFLP…RGSQGSQGPS (977 aa)) is disordered. Pro-10, Pro-13, Pro-28, and Pro-34 each carry 4-hydroxyproline. Residues 17 to 66 (GPMGLMGPRGPPGASGAPGPQGFQGPAGEPGEPGQTGPAGARGPAGPPGK) show a composition bias toward low complexity. The residue at position 91 (Lys-91) is a 5-hydroxylysine; alternate. The O-linked (Gal...) hydroxylysine; alternate glycan is linked to Lys-91. 2 stretches are compositionally biased toward low complexity: residues 138–159 (SRGSDGSVGPVGPAGPIGSAGP) and 205–226 (PGANGLTGAKGAAGLPGVAGAP). Residues 258–267 (GESGGKGEPG) are compositionally biased toward gly residues. Positions 268–278 (SAGPQGPPGSS) are enriched in low complexity. A compositionally biased stretch (gly residues) spans 300–309 (GLRGGPGSRG). Positions 322 to 338 (PAGARGASGPAGVRGPS) are enriched in low complexity. 4-hydroxyproline is present on residues Pro-344 and Pro-347. The segment covering 373-392 (LPGIDGRPGPIGPAGARGEA) has biased composition (low complexity). The span at 441-450 (GVQGGKGEQG) shows a compositional bias: gly residues. Low complexity-rich tracts occupy residues 497-514 (SGESGAVGPSGAIGSRGP) and 526-536 (EPGVVGAPGTA). The span at 537–546 (GPAGSGGLPG) shows a compositional bias: gly residues. Composition is skewed to low complexity over residues 569-605 (VGTTGRDGARGAPGAVGAPGPAGATGDRGEAGAAGPA) and 620-640 (VGPAGPNGFAGPAGAAGQPGA). The span at 641-650 (KGERGTKGPK) shows a compositional bias: basic and acidic residues. Residues 658-668 (PTGPVGSAGPA) show a composition bias toward low complexity. Residues 678-687 (GSRGDGGPPG) are compositionally biased toward gly residues. The segment covering 689–698 (TGFPGAAGRT) has biased composition (low complexity). Residues 735–744 (GETGAGGPPG) show a composition bias toward gly residues. Low complexity-rich tracts occupy residues 752 to 779 (SGEPGTAGPPGTAGPQGLLGAPGILGLP) and 787 to 797 (LPGVAGAVGEP). Over residues 798–817 (GPLGIGPPGARGPSGAGVNG) the composition is skewed to gly residues. 2 stretches are compositionally biased toward low complexity: residues 853–871 (PVGAAGAPGPHGAVGPAGK) and 878–898 (PGPAGSVGPVGAVGPRGPSGP). Residues 902-913 (RGDKGEAGDKGP) show a composition bias toward basic and acidic residues.

It belongs to the fibrillar collagen family. As to quaternary structure, trimers of one alpha 2(I) and two alpha 1(I) chains. Interacts (via C-terminus) with TMEM131 (via PapD-L domain); the interaction is direct and is involved in assembly and TRAPPIII ER-to-Golgi transport complex-dependent secretion of collagen. Post-translationally, prolines at the third position of the tripeptide repeating unit (G-X-Y) are hydroxylated in some or all of the chains. In terms of tissue distribution, expressed in bones.

The protein resides in the secreted. It is found in the extracellular space. The protein localises to the extracellular matrix. Type I collagen is a member of group I collagen (fibrillar forming collagen). This Scelidodon sp. (strain SLP-2019) (South American ground sloth) protein is Collagen alpha-2(I) chain.